The sequence spans 111 residues: 2Fe-2S ferredoxin (111 aa).

Residues 1 to 104 (MPKVLFLPHK…DIEVEIPLYN (104 aa)) enclose the 2Fe-2S ferredoxin-type domain. [2Fe-2S] cluster contacts are provided by Cys-42, Cys-48, Cys-51, and Cys-87.

This sequence belongs to the adrenodoxin/putidaredoxin family. The cofactor is [2Fe-2S] cluster.

Ferredoxin are iron-sulfur proteins that transfer electrons in a wide variety of metabolic reactions. This chain is 2Fe-2S ferredoxin (fdx), found in Buchnera aphidicola subsp. Acyrthosiphon pisum (strain APS) (Acyrthosiphon pisum symbiotic bacterium).